The chain runs to 104 residues: Large ribosomal subunit protein eL30 (104 aa).

This sequence belongs to the eukaryotic ribosomal protein eL30 family.

The chain is Large ribosomal subunit protein eL30 (rpl30e) from Sulfolobus acidocaldarius (strain ATCC 33909 / DSM 639 / JCM 8929 / NBRC 15157 / NCIMB 11770).